A 173-amino-acid polypeptide reads, in one-letter code: MNKAKTLLFTALAFGLSHQALAQDLTVKMTDLQTGKPVGTIELSQNKYGVVFTPELADLTPGMHGFHIHQNGSCASSEKDGKVVLGGAAGGHYDPEHTNKHGFPWTDDNHKGDLPALFVSANGLATNPVLAPRLTLKELKGHAIMIHAGGDNHSDMPKALGGGGARVACGVIQ.

Positions 1–22 are cleaved as a signal peptide; sequence MNKAKTLLFTALAFGLSHQALA. Cu cation contacts are provided by histidine 67, histidine 69, and histidine 92. A disulfide bond links cysteine 74 and cysteine 169. The Zn(2+) site is built by histidine 92, histidine 101, histidine 110, and aspartate 113. Histidine 147 contributes to the Cu cation binding site.

It belongs to the Cu-Zn superoxide dismutase family. As to quaternary structure, homodimer. Cu cation is required as a cofactor. It depends on Zn(2+) as a cofactor.

It is found in the periplasm. It carries out the reaction 2 superoxide + 2 H(+) = H2O2 + O2. Functionally, destroys radicals which are normally produced within the cells and which are toxic to biological systems. This is Superoxide dismutase [Cu-Zn] (sodC) from Photobacterium leiognathi.